The chain runs to 437 residues: Nickel-cobalt-cadmium resistance protein NccC (437 aa).

The first 48 residues, 1–48 (MGAVLKAEANIFRSHPFRPMNQATPKKLRSAPCIGVALLLMATGSIQA), serve as a signal peptide directing secretion.

This sequence belongs to the outer membrane factor (OMF) (TC 1.B.17) family.

Its function is as follows. Component of the NCC cation-efflux system that confers resistance to nickel, cobalt and cadmium. The polypeptide is Nickel-cobalt-cadmium resistance protein NccC (nccC) (Alcaligenes xylosoxydans xylosoxydans (Achromobacter xylosoxidans)).